The sequence spans 585 residues: A-type ATP synthase subunit A (585 aa).

232-239 contacts ATP; it reads GPFGSGKT.

Belongs to the ATPase alpha/beta chains family. Has multiple subunits with at least A(3), B(3), C, D, E, F, H, I and proteolipid K(x).

It is found in the cell membrane. The enzyme catalyses ATP + H2O + 4 H(+)(in) = ADP + phosphate + 5 H(+)(out). Component of the A-type ATP synthase that produces ATP from ADP in the presence of a proton gradient across the membrane. The A chain is the catalytic subunit. This is A-type ATP synthase subunit A from Methanosphaera stadtmanae (strain ATCC 43021 / DSM 3091 / JCM 11832 / MCB-3).